The sequence spans 215 residues: Probable nicotinate-nucleotide adenylyltransferase (215 aa).

Belongs to the NadD family.

The catalysed reaction is nicotinate beta-D-ribonucleotide + ATP + H(+) = deamido-NAD(+) + diphosphate. Its pathway is cofactor biosynthesis; NAD(+) biosynthesis; deamido-NAD(+) from nicotinate D-ribonucleotide: step 1/1. Its function is as follows. Catalyzes the reversible adenylation of nicotinate mononucleotide (NaMN) to nicotinic acid adenine dinucleotide (NaAD). This chain is Probable nicotinate-nucleotide adenylyltransferase, found in Shewanella putrefaciens (strain CN-32 / ATCC BAA-453).